We begin with the raw amino-acid sequence, 376 residues long: N-acetyldiaminopimelate deacetylase (376 aa).

The active site involves aspartate 69. The active-site Proton acceptor is glutamate 128.

It belongs to the peptidase M20A family. N-acetyldiaminopimelate deacetylase subfamily.

The enzyme catalyses N-acetyl-(2S,6S)-2,6-diaminopimelate + H2O = (2S,6S)-2,6-diaminopimelate + acetate. Its pathway is amino-acid biosynthesis; L-lysine biosynthesis via DAP pathway; LL-2,6-diaminopimelate from (S)-tetrahydrodipicolinate (acetylase route): step 3/3. In terms of biological role, catalyzes the conversion of N-acetyl-diaminopimelate to diaminopimelate and acetate. The sequence is that of N-acetyldiaminopimelate deacetylase from Bacillus cereus (strain B4264).